We begin with the raw amino-acid sequence, 93 residues long: Late embryogenesis abundant protein B19.1A (93 aa).

The tract at residues 1–93 (MASGQQERSQ…IDESKFKTKS (93 aa)) is disordered. Composition is skewed to basic and acidic residues over residues 9–19 (SQLDRKAREGE) and 73–93 (GGERAAREGIDIDESKFKTKS).

Belongs to the small hydrophilic plant seed protein family. As to expression, embryos and young seedlings.

In terms of biological role, lea proteins are late embryonic proteins abundant in higher plant seed embryos. It may have a role in desiccation tolerance by acting as an osmoprotective protein or as a desiccation-damage repair protein. The polypeptide is Late embryogenesis abundant protein B19.1A (B19.1A) (Hordeum vulgare (Barley)).